We begin with the raw amino-acid sequence, 225 residues long: Platelet-activating factor acetylhydrolase IB subunit beta homolog (225 aa).

Belongs to the 'GDSL' lipolytic enzyme family. Platelet-activating factor acetylhydrolase IB beta/gamma subunits subfamily. Does not interact with Lis-1.

The polypeptide is Platelet-activating factor acetylhydrolase IB subunit beta homolog (Paf-AHalpha) (Drosophila melanogaster (Fruit fly)).